Reading from the N-terminus, the 981-residue chain is Beta-glucuronidase (981 aa).

Glu-500 functions as the Nucleophile in the catalytic mechanism. 5 residues coordinate Mg(2+): Asn-561, Trp-562, Ile-563, Ser-581, and Glu-583.

The protein belongs to the glycosyl hydrolase 2 family.

The protein resides in the periplasm. The catalysed reaction is a beta-D-glucuronoside + H2O = D-glucuronate + an alcohol. Beta-glucuronidase involved in ulvan degradation. Ulvan is the main polysaccharide component of the Ulvales (green seaweed) cell wall. It is composed of disaccharide building blocks comprising 3-sulfated rhamnose (Rha3S) linked to D-glucuronic acid (GlcA), L-iduronic acid (IduA), or D-xylose (Xyl). Beta-glucuronidase removes GlcA side chains present on some O2 residues of Rha3S. Can remove the GlcA side chains from polymeric ulvan or from smaller oligomers. This chain is Beta-glucuronidase, found in Formosa agariphila (strain DSM 15362 / KCTC 12365 / LMG 23005 / KMM 3901 / M-2Alg 35-1).